The following is a 260-amino-acid chain: UPF0246 protein Bcenmc03_2247 (260 aa).

This sequence belongs to the UPF0246 family.

This Burkholderia orbicola (strain MC0-3) protein is UPF0246 protein Bcenmc03_2247.